The chain runs to 289 residues: Ribonuclease Z (289 aa).

7 residues coordinate Zn(2+): His63, His65, Asp67, His68, His143, Asp197, and His255. Asp67 serves as the catalytic Proton acceptor.

Belongs to the RNase Z family. As to quaternary structure, homodimer. Zn(2+) serves as cofactor.

The catalysed reaction is Endonucleolytic cleavage of RNA, removing extra 3' nucleotides from tRNA precursor, generating 3' termini of tRNAs. A 3'-hydroxy group is left at the tRNA terminus and a 5'-phosphoryl group is left at the trailer molecule.. Its function is as follows. Zinc phosphodiesterase, which displays some tRNA 3'-processing endonuclease activity. Probably involved in tRNA maturation, by removing a 3'-trailer from precursor tRNA. The protein is Ribonuclease Z of Azobacteroides pseudotrichonymphae genomovar. CFP2.